Consider the following 207-residue polypeptide: Large ribosomal subunit protein uL4 (207 aa).

A disordered region spans residues 52–77 (RGWADVSGGGRKPWRQKGTGRARAGS).

This sequence belongs to the universal ribosomal protein uL4 family. Part of the 50S ribosomal subunit.

In terms of biological role, one of the primary rRNA binding proteins, this protein initially binds near the 5'-end of the 23S rRNA. It is important during the early stages of 50S assembly. It makes multiple contacts with different domains of the 23S rRNA in the assembled 50S subunit and ribosome. Forms part of the polypeptide exit tunnel. The chain is Large ribosomal subunit protein uL4 from Moorella thermoacetica (strain ATCC 39073 / JCM 9320).